We begin with the raw amino-acid sequence, 852 residues long: Alanine--tRNA ligase (852 aa).

Residues histidine 554, histidine 558, cysteine 656, and histidine 660 each contribute to the Zn(2+) site.

Belongs to the class-II aminoacyl-tRNA synthetase family. Zn(2+) serves as cofactor.

It is found in the cytoplasm. It carries out the reaction tRNA(Ala) + L-alanine + ATP = L-alanyl-tRNA(Ala) + AMP + diphosphate. In terms of biological role, catalyzes the attachment of alanine to tRNA(Ala) in a two-step reaction: alanine is first activated by ATP to form Ala-AMP and then transferred to the acceptor end of tRNA(Ala). Also edits incorrectly charged Ser-tRNA(Ala) and Gly-tRNA(Ala) via its editing domain. This Campylobacter concisus (strain 13826) protein is Alanine--tRNA ligase.